The chain runs to 700 residues: Ribonucleoside-diphosphate reductase subunit alpha (700 aa).

Residues Thr-153, 169–170, Gly-198, 380–384, and 580–584 contribute to the substrate site; these read SC, NLCSE, and PTGSI. Residues Cys-170 and Cys-409 are joined by a disulfide bond. Asn-380 functions as the Proton acceptor in the catalytic mechanism. Cys-382 serves as the catalytic Cysteine radical intermediate. The active-site Proton acceptor is Glu-384.

The protein belongs to the ribonucleoside diphosphate reductase large chain family. Tetramer of two alpha and two beta subunits.

It catalyses the reaction a 2'-deoxyribonucleoside 5'-diphosphate + [thioredoxin]-disulfide + H2O = a ribonucleoside 5'-diphosphate + [thioredoxin]-dithiol. Under complex allosteric control mediated by deoxynucleoside triphosphates and ATP binding. The type of nucleotide bound at the specificity site determines substrate preference. It seems probable that ATP makes the enzyme reduce CDP and UDP, dGTP favors ADP reduction and dTTP favors GDP reduction. In terms of biological role, provides the precursors necessary for DNA synthesis. Catalyzes the biosynthesis of deoxyribonucleotides from the corresponding ribonucleotides. This chain is Ribonucleoside-diphosphate reductase subunit alpha, found in Bacillus subtilis (strain 168).